A 723-amino-acid chain; its full sequence is Catalase-peroxidase (723 aa).

The tryptophyl-tyrosyl-methioninium (Trp-Tyr) (with M-252) cross-link spans 98-226 (WHSAGSYRVG…LAAVMMGLIY (129 aa)). H99 functions as the Proton acceptor in the catalytic mechanism. Positions 226–252 (YVNPEGVDGNPDPLKTAKDMRVTFARM) form a cross-link, tryptophyl-tyrosyl-methioninium (Tyr-Met) (with W-98). H267 contacts heme b.

Belongs to the peroxidase family. Peroxidase/catalase subfamily. As to quaternary structure, homodimer or homotetramer. Heme b serves as cofactor. Post-translationally, formation of the three residue Trp-Tyr-Met cross-link is important for the catalase, but not the peroxidase activity of the enzyme.

The enzyme catalyses H2O2 + AH2 = A + 2 H2O. The catalysed reaction is 2 H2O2 = O2 + 2 H2O. Functionally, bifunctional enzyme with both catalase and broad-spectrum peroxidase activity. This Vibrio vulnificus (strain YJ016) protein is Catalase-peroxidase.